Consider the following 329-residue polypeptide: Capsular polysaccharide phosphotransferase WcwK (329 aa).

The protein belongs to the stealth family.

The sequence is that of Capsular polysaccharide phosphotransferase WcwK (wcwK) from Streptococcus pneumoniae.